The sequence spans 504 residues: Protein psiD (504 aa).

An N-terminal signal peptide occupies residues 1 to 21; sequence MKYSYLLLILLLSNLYKEGFS. Asn87, Asn136, Asn236, Asn252, Asn290, and Asn373 each carry an N-linked (GlcNAc...) asparagine glycan. The PA14 domain maps to 111–251; sequence LTRVGDSTYA…YDACGVCDGH (141 aa). Residues 417–430 show a composition bias toward low complexity; it reads TVTPTVTPTVTPTP. A disordered region spans residues 417-453; that stretch reads TVTPTVTPTVTPTPTTTPTPSPTTVPPRPTPTPLPAD. The span at 431–453 shows a compositional bias: pro residues; sequence TTTPTPSPTTVPPRPTPTPLPAD. Residue Asn483 is glycosylated (N-linked (GlcNAc...) asparagine).

It belongs to the prespore-cell-inducing factor family.

The protein localises to the secreted. The chain is Protein psiD (psiD) from Dictyostelium discoideum (Social amoeba).